We begin with the raw amino-acid sequence, 654 residues long: Transcription factor E2-alpha (654 aa).

Residues 19-27 carry the 9aaTAD motif; it reads LLDFSMMFP. Positions 31 to 103 are disordered; that stretch reads TNGKGRPASL…LGPGLGGKSG (73 aa). The segment covering 55–68 has biased composition (low complexity); it reads SSGSWGSGDQSSSS. Residues 69-79 show a composition bias toward polar residues; that stretch reads FDPSRTFSEGT. Positions 84 to 94 are enriched in low complexity; it reads SHSSLSSSTFL. Residues serine 134 and serine 139 each carry the phosphoserine modification. Disordered regions lie at residues 135 to 205, 239 to 268, 292 to 329, and 343 to 385; these read PGPL…SAKT, MLGG…FGGL, SFSS…GSSG, and DHSS…YDGG. Residues 147-156 show a composition bias toward low complexity; the sequence is SQYYPSYSGS. The short motif at 170 to 176 is the Nuclear localization signal element; sequence PKKVRKV. Low complexity predominate over residues 256–268; it reads VGSSGSSSTFGGL. The span at 343–354 shows a compositional bias: low complexity; sequence DHSSNNFSSSPS. Phosphothreonine is present on threonine 355. Serine 359 carries the post-translational modification Phosphoserine. Arginine 371 bears the Omega-N-methylarginine mark. Serine 379 is modified (phosphoserine). The segment at 389 to 425 is leucine-zipper; that stretch reads LQSKIEDHLDEAIHVLRSHAVGTAGDMHTLLPGHGAL. Positions 461–552 are disordered; it reads NHAALPSQPG…KAEREKERRV (92 aa). Residue lysine 498 forms a Glycyl lysine isopeptide (Lys-Gly) (interchain with G-Cter in SUMO2) linkage. Basic and acidic residues predominate over residues 512 to 523; sequence DHSEEEKKELKA. At serine 529 the chain carries Phosphoserine. A Phosphothreonine modification is found at aspartate 531. Over residues 542 to 552 the composition is skewed to basic and acidic residues; the sequence is QKAEREKERRV. Positions 549–602 constitute a bHLH domain; that stretch reads ERRVANNARERLRVRDINEAFKELGRMCQLHLNSEKPQTKLLILHQAVSVILNL. Lysine 625 is covalently cross-linked (Glycyl lysine isopeptide (Lys-Gly) (interchain with G-Cter in SUMO2)). Positions 633 to 654 are disordered; it reads PQMVLSAPHPGLSEAHNPAGHM.

As to quaternary structure, homodimer. Heterodimer; efficient DNA binding requires dimerization with another bHLH protein. Forms a heterodimer with ASH1, TWIST1 and TWIST2. Forms a heterodimer with MYOG; heterodimerization enhances MYOG DNA-binding and transcriptional activities. Forms a heterodimer with NEUROD1; the heterodimer is inhibited in presence of ID2, but not NR0B2, to E-box element. Forms a heterodimer with TCF15; the heterodimer binds E-box element. Forms a heterodimer with ATOH8; repress transcription of TCF3 and TCF3/NEUROG3 dimer-induced transactivation of E box-dependent promoters. Component of a nuclear TAL-1 complex composed at least of CBFA2T3, LDB1, TAL1 and TCF3. Interacts with NEUROD2, PTF1A and TGFB1I1. Interacts with EP300 and UBE2I. Interacts with BHLHA9. Interacts with ASB2; the interaction is mediated by SKP2 and targets TCF3 for Notch-induced proteasomal degradation. Forms a heterodimer with ATOH7; required for ATOH7 DNA-binding. In terms of assembly, interacts with RALGAPA1 and FIGLA. In terms of processing, phosphorylated following NGF stimulation. Undergoes Notch-induced ubiquitination and subsequent proteasomal degradation which is mediated by ASB1 or ASB2, the substrate-recognition components of probable ECS E3 ubiquitin-protein ligase complexes.

It is found in the nucleus. Functionally, transcriptional regulator involved in the initiation of neuronal differentiation and mesenchymal to epithelial transition. Heterodimers between TCF3 and tissue-specific basic helix-loop-helix (bHLH) proteins play major roles in determining tissue-specific cell fate during embryogenesis, like muscle or early B-cell differentiation. Together with TCF15, required for the mesenchymal to epithelial transition. Dimers bind DNA on E-box motifs: 5'-CANNTG-3'. Binds to the kappa-E2 site in the kappa immunoglobulin gene enhancer. Binds to IEB1 and IEB2, which are short DNA sequences in the insulin gene transcription control region. In terms of biological role, facilitates ATOH7 binding to DNA at the consensus sequence 5'-CAGGTG-3', and positively regulates transcriptional activity. This Homo sapiens (Human) protein is Transcription factor E2-alpha (TCF3).